The sequence spans 116 residues: MTDQADTAMPIQFTDAAAAKVKGLLEEEQNPALKLRVYVTGGGCSGFQYGFTFDEKVNDGDFTIEKQGVLLVVDPMSLQYLVGGEVDYTSGLEGSRFFVKNPNATTTCGCGASFSV.

Iron-sulfur cluster-binding residues include C44, C108, and C110.

The protein belongs to the HesB/IscA family. In terms of assembly, homodimer. Requires iron-sulfur cluster as cofactor.

In terms of biological role, required for insertion of 4Fe-4S clusters for at least IspG. The polypeptide is Iron-sulfur cluster insertion protein ErpA (Shewanella baltica (strain OS223)).